Consider the following 83-residue polypeptide: STATDSSYYTNQQHPAGGGGGGASPYAHMGSYQYHASGLNNVSYSAKSSYDLGYTAAYTSYAPYGTSSSPVNNEPDKEDLEPE.

Positions 1–14 (STATDSSYYTNQQH) are enriched in polar residues. Disordered regions lie at residues 1-27 (STAT…SPYA) and 63-83 (PYGT…LEPE).

This sequence belongs to the distal-less homeobox family. In terms of assembly, interacts (via homeobox DNA-binding domain) with POU4F2; this interaction enhances retinal ganglion cell (RGC) differentiation.

It localises to the nucleus. In terms of biological role, acts as a transcriptional activator. Activates transcription of CGA/alpha-GSU, via binding to the downstream activin regulatory element (DARE) in the gene promoter. Plays a role in terminal differentiation of interneurons, such as amacrine and bipolar cells in the developing retina. Likely to play a regulatory role in the development of the ventral forebrain. May play a role in craniofacial patterning and morphogenesis. This chain is Homeobox protein DLX-2 (Dlx2), found in Rattus norvegicus (Rat).